A 305-amino-acid polypeptide reads, in one-letter code: Glycine--tRNA ligase alpha subunit (305 aa).

The protein belongs to the class-II aminoacyl-tRNA synthetase family. As to quaternary structure, tetramer of two alpha and two beta subunits.

It localises to the cytoplasm. The catalysed reaction is tRNA(Gly) + glycine + ATP = glycyl-tRNA(Gly) + AMP + diphosphate. The chain is Glycine--tRNA ligase alpha subunit from Streptococcus pyogenes serotype M49 (strain NZ131).